Consider the following 126-residue polypeptide: Small ribosomal subunit protein bS6 (126 aa).

The protein belongs to the bacterial ribosomal protein bS6 family.

Its function is as follows. Binds together with bS18 to 16S ribosomal RNA. In Bordetella bronchiseptica (strain ATCC BAA-588 / NCTC 13252 / RB50) (Alcaligenes bronchisepticus), this protein is Small ribosomal subunit protein bS6.